Reading from the N-terminus, the 904-residue chain is Envelope glycoprotein B (904 aa).

The signal sequence occupies residues 1–22; it reads MRGGGLICALVVGALVAAVASA. Residues 23-771 are Virion surface-facing; that stretch reads APAAPAAPRA…SGVSSFMSNP (749 aa). The interval 40–83 is disordered; the sequence is VAANGGPASRPPPVPSPATTKARKRKTKKPPKRPEATPPPDANA. A compositionally biased stretch (basic residues) spans 60–70; the sequence is KARKRKTKKPP. 2 N-linked (GlcNAc...) asparagine; by host glycosylation sites follow: N82 and N136. Disulfide bonds link C111–C570, C128–C526, C202–C266, C359–C407, and C593–C630. Involved in fusion and/or binding to host membrane stretches follow at residues 168–174 and 253–260; these read VWFGHRY and RVEAFHRY. N-linked (GlcNAc...) asparagine; by host glycosylation is found at N393, N425, and N486. Residues 467-490 form a disordered region; that stretch reads QDRKPRNATPAPLREAPSANASVE. N671 carries an N-linked (GlcNAc...) asparagine; by host glycan. Hydrophobic membrane proximal region stretches follow at residues 716-769 and 728-768; these read IDTV…SFMS and MFAG…SSFM. A helical membrane pass occupies residues 772–792; sequence FGALAVGLLVLAGLVAAFFAF. The Intravirion portion of the chain corresponds to 793-904; that stretch reads RYVLQLQRNP…EDEAGDEDEL (112 aa). The disordered stretch occupies residues 816–835; sequence TSDPGGVGGEGEEGAEGGGF. Positions 849-852 match the Golgi targeting motif; sequence YMAL. Residues 883-904 are disordered; the sequence is KRNKARYSPLHNEDEAGDEDEL. The Internalization motif signature appears at 889 to 892; it reads YSPL.

Belongs to the herpesviridae glycoprotein B family. Homotrimer; disulfide-linked. Binds to heparan sulfate proteoglycans. Interacts with gH/gL heterodimer.

It localises to the virion membrane. The protein resides in the host cell membrane. It is found in the host endosome membrane. The protein localises to the host Golgi apparatus membrane. Functionally, envelope glycoprotein that forms spikes at the surface of virion envelope. Essential for the initial attachment to heparan sulfate moieties of the host cell surface proteoglycans. Involved in fusion of viral and cellular membranes leading to virus entry into the host cell. Following initial binding to its host receptors, membrane fusion is mediated by the fusion machinery composed at least of gB and the heterodimer gH/gL. May be involved in the fusion between the virion envelope and the outer nuclear membrane during virion egress. This chain is Envelope glycoprotein B, found in Homo sapiens (Human).